We begin with the raw amino-acid sequence, 155 residues long: Endoribonuclease YbeY (155 aa).

Positions 114, 118, and 124 each coordinate Zn(2+).

Belongs to the endoribonuclease YbeY family. Zn(2+) serves as cofactor.

The protein localises to the cytoplasm. Its function is as follows. Single strand-specific metallo-endoribonuclease involved in late-stage 70S ribosome quality control and in maturation of the 3' terminus of the 16S rRNA. This is Endoribonuclease YbeY from Enterobacter sp. (strain 638).